A 287-amino-acid polypeptide reads, in one-letter code: Energy-coupling factor transporter ATP-binding protein EcfA1 (287 aa).

An ABC transporter domain is found at isoleucine 6–aspartate 248. Glycine 47–serine 54 is an ATP binding site.

This sequence belongs to the ABC transporter superfamily. Energy-coupling factor EcfA family. As to quaternary structure, forms a stable energy-coupling factor (ECF) transporter complex composed of 2 membrane-embedded substrate-binding proteins (S component), 2 ATP-binding proteins (A component) and 2 transmembrane proteins (T component).

Its subcellular location is the cell membrane. Functionally, ATP-binding (A) component of a common energy-coupling factor (ECF) ABC-transporter complex. Unlike classic ABC transporters this ECF transporter provides the energy necessary to transport a number of different substrates. The polypeptide is Energy-coupling factor transporter ATP-binding protein EcfA1 (Symbiobacterium thermophilum (strain DSM 24528 / JCM 14929 / IAM 14863 / T)).